A 142-amino-acid polypeptide reads, in one-letter code: Large ribosomal subunit protein uL13 (142 aa).

Belongs to the universal ribosomal protein uL13 family. In terms of assembly, part of the 50S ribosomal subunit.

This protein is one of the early assembly proteins of the 50S ribosomal subunit, although it is not seen to bind rRNA by itself. It is important during the early stages of 50S assembly. The polypeptide is Large ribosomal subunit protein uL13 (Shewanella putrefaciens (strain CN-32 / ATCC BAA-453)).